A 370-amino-acid chain; its full sequence is Dual-specificity RNA methyltransferase RlmN (370 aa).

Residue Glu93 is the Proton acceptor of the active site. In terms of domain architecture, Radical SAM core spans 99-337; it reads EEGRGTLCVS…VTTVRKTRGD (239 aa). Cys106 and Cys343 form a disulfide bridge. [4Fe-4S] cluster contacts are provided by Cys113, Cys117, and Cys120. S-adenosyl-L-methionine contacts are provided by residues 167–168, Ser199, 221–223, and Asn300; these read GE and SLH. The active-site S-methylcysteine intermediate is Cys343.

It belongs to the radical SAM superfamily. RlmN family. It depends on [4Fe-4S] cluster as a cofactor.

Its subcellular location is the cytoplasm. The enzyme catalyses adenosine(2503) in 23S rRNA + 2 reduced [2Fe-2S]-[ferredoxin] + 2 S-adenosyl-L-methionine = 2-methyladenosine(2503) in 23S rRNA + 5'-deoxyadenosine + L-methionine + 2 oxidized [2Fe-2S]-[ferredoxin] + S-adenosyl-L-homocysteine. The catalysed reaction is adenosine(37) in tRNA + 2 reduced [2Fe-2S]-[ferredoxin] + 2 S-adenosyl-L-methionine = 2-methyladenosine(37) in tRNA + 5'-deoxyadenosine + L-methionine + 2 oxidized [2Fe-2S]-[ferredoxin] + S-adenosyl-L-homocysteine. Functionally, specifically methylates position 2 of adenine 2503 in 23S rRNA and position 2 of adenine 37 in tRNAs. m2A2503 modification seems to play a crucial role in the proofreading step occurring at the peptidyl transferase center and thus would serve to optimize ribosomal fidelity. The polypeptide is Dual-specificity RNA methyltransferase RlmN (Francisella tularensis subsp. tularensis (strain WY96-3418)).